The sequence spans 141 residues: Large ribosomal subunit protein uL16 (141 aa).

It belongs to the universal ribosomal protein uL16 family. As to quaternary structure, part of the 50S ribosomal subunit.

In terms of biological role, binds 23S rRNA and is also seen to make contacts with the A and possibly P site tRNAs. The polypeptide is Large ribosomal subunit protein uL16 (Aliarcobacter butzleri (strain RM4018) (Arcobacter butzleri)).